Reading from the N-terminus, the 238-residue chain is Lipid transferase CIDEC (238 aa).

Residues 1–35 (MEYAMKSLSLLYPKSLSRHVSVRTSVVTQQLLSEP) form a required for liquid-liquid phase separation (LLPS) region. A CIDE-N domain is found at 41-118 (RARPCRVSTA…VLQKGQKWQP (78 aa)).

Belongs to the CIDE family. In terms of assembly, homodimer. Homooligomer; undergoes liquid-liquid phase separation (LLPS) via its N-terminus, facilitating lipid droplet fusion, occurs at the lipid droplet contact sites. Interacts with CIDEA. Interacts with PLIN1. Interacts with NFAT5; this interaction is direct and retains NFAT5 in the cytoplasm. Interacts with CEBPB. Interacts with isoform CLSTN3beta of CLSTN3; inhibiting the lipid transferase activity of CIDEC. In terms of processing, ubiquitinated and targeted to proteasomal degradation, resulting in a short half-life (about 15 minutes in 3T3-L1 cells). Protein stability depends on triaclyglycerol synthesis, fatty acid availability and lipid droplet formation. In terms of tissue distribution, expressed mainly in adipose tissue, small intestine, heart, colon and stomach and, at lower levels, in brain, kidney and liver.

It is found in the lipid droplet. The protein resides in the endoplasmic reticulum. The protein localises to the nucleus. The catalysed reaction is a triacyl-sn-glycerol(in) = a triacyl-sn-glycerol(out). Functionally, lipid transferase specifically expressed in white adipose tissue, which promotes unilocular lipid droplet formation by mediating lipid droplet fusion. Lipid droplet fusion promotes their enlargement, restricting lipolysis and favoring lipid storage. Localizes on the lipid droplet surface, at focal contact sites between lipid droplets, and mediates atypical lipid droplet fusion by undergoing liquid-liquid phase separation (LLPS) and promoting directional net neutral lipid transfer from the smaller to larger lipid droplets. The transfer direction may be driven by the internal pressure difference between the contacting lipid droplet pair. Its role in neutral lipid transfer and lipid droplet enlargement is activated by the interaction with PLIN1. May also act as a CEBPB coactivator in the white adipose tissue to control the expression of a subset of CEBPB downstream target genes, including SOCS1, SOCS3, TGFB1, TGFBR1, ID2 and XDH. When overexpressed in preadipocytes, induces apoptosis or increases cell susceptibility to apoptosis induced by serum deprivation or TGFB treatment. The sequence is that of Lipid transferase CIDEC from Homo sapiens (Human).